The following is a 659-amino-acid chain: Macrolide export ATP-binding/permease protein MacB (659 aa).

The ABC transporter domain maps to 10 to 249; that stretch reads IELRGIRKRY…QPLLHHAGLS (240 aa). Position 47–54 (47–54) interacts with ATP; that stretch reads GSSGSGKS. 4 helical membrane-spanning segments follow: residues 287–307, 538–558, 594–614, and 619–639; these read SLTL…LAIG, LGLV…NVML, ITGG…LVFW, and VFSF…GLIF.

It belongs to the ABC transporter superfamily. Macrolide exporter (TC 3.A.1.122) family. As to quaternary structure, homodimer.

Its subcellular location is the cell inner membrane. Its function is as follows. Non-canonical ABC transporter that contains transmembrane domains (TMD), which form a pore in the inner membrane, and an ATP-binding domain (NBD), which is responsible for energy generation. Confers resistance against macrolides. The sequence is that of Macrolide export ATP-binding/permease protein MacB from Nitrosomonas europaea (strain ATCC 19718 / CIP 103999 / KCTC 2705 / NBRC 14298).